The chain runs to 448 residues: Amino-acid acetyltransferase (448 aa).

Residues 295–433 (EQIRRANIND…KQVLYNYQRR (139 aa)) enclose the N-acetyltransferase domain.

This sequence belongs to the acetyltransferase family. ArgA subfamily. Homohexamer.

It localises to the cytoplasm. The catalysed reaction is L-glutamate + acetyl-CoA = N-acetyl-L-glutamate + CoA + H(+). It functions in the pathway amino-acid biosynthesis; L-arginine biosynthesis; N(2)-acetyl-L-ornithine from L-glutamate: step 1/4. The sequence is that of Amino-acid acetyltransferase from Photorhabdus laumondii subsp. laumondii (strain DSM 15139 / CIP 105565 / TT01) (Photorhabdus luminescens subsp. laumondii).